The primary structure comprises 265 residues: Tryptophan synthase alpha chain (265 aa).

Active-site proton acceptor residues include Glu-48 and Asp-59.

Belongs to the TrpA family. As to quaternary structure, tetramer of two alpha and two beta chains.

The catalysed reaction is (1S,2R)-1-C-(indol-3-yl)glycerol 3-phosphate + L-serine = D-glyceraldehyde 3-phosphate + L-tryptophan + H2O. Its pathway is amino-acid biosynthesis; L-tryptophan biosynthesis; L-tryptophan from chorismate: step 5/5. The alpha subunit is responsible for the aldol cleavage of indoleglycerol phosphate to indole and glyceraldehyde 3-phosphate. This Ruthia magnifica subsp. Calyptogena magnifica protein is Tryptophan synthase alpha chain.